The sequence spans 406 residues: Methylthioribose-1-phosphate isomerase (406 aa).

Aspartate 277 (proton donor) is an active-site residue.

The protein belongs to the eIF-2B alpha/beta/delta subunits family. MtnA subfamily.

The protein resides in the cytoplasm. It localises to the nucleus. The catalysed reaction is 5-(methylsulfanyl)-alpha-D-ribose 1-phosphate = 5-(methylsulfanyl)-D-ribulose 1-phosphate. It participates in amino-acid biosynthesis; L-methionine biosynthesis via salvage pathway; L-methionine from S-methyl-5-thio-alpha-D-ribose 1-phosphate: step 1/6. Catalyzes the interconversion of methylthioribose-1-phosphate (MTR-1-P) into methylthioribulose-1-phosphate (MTRu-1-P). The sequence is that of Methylthioribose-1-phosphate isomerase from Debaryomyces hansenii (strain ATCC 36239 / CBS 767 / BCRC 21394 / JCM 1990 / NBRC 0083 / IGC 2968) (Yeast).